The following is a 466-amino-acid chain: ATP synthase subunit beta (466 aa).

Residue 156–163 (GGAGVGKT) coordinates ATP.

Belongs to the ATPase alpha/beta chains family. As to quaternary structure, F-type ATPases have 2 components, CF(1) - the catalytic core - and CF(0) - the membrane proton channel. CF(1) has five subunits: alpha(3), beta(3), gamma(1), delta(1), epsilon(1). CF(0) has three main subunits: a(1), b(2) and c(9-12). The alpha and beta chains form an alternating ring which encloses part of the gamma chain. CF(1) is attached to CF(0) by a central stalk formed by the gamma and epsilon chains, while a peripheral stalk is formed by the delta and b chains.

It localises to the cell membrane. It carries out the reaction ATP + H2O + 4 H(+)(in) = ADP + phosphate + 5 H(+)(out). In terms of biological role, produces ATP from ADP in the presence of a proton gradient across the membrane. The catalytic sites are hosted primarily by the beta subunits. The sequence is that of ATP synthase subunit beta from Polynucleobacter asymbioticus (strain DSM 18221 / CIP 109841 / QLW-P1DMWA-1) (Polynucleobacter necessarius subsp. asymbioticus).